A 238-amino-acid chain; its full sequence is Probable septum site-determining protein MinC (238 aa).

Belongs to the MinC family. As to quaternary structure, interacts with MinD and FtsZ.

Its function is as follows. Cell division inhibitor that blocks the formation of polar Z ring septums. Rapidly oscillates between the poles of the cell to destabilize FtsZ filaments that have formed before they mature into polar Z rings. Prevents FtsZ polymerization. This Xylella fastidiosa (strain M12) protein is Probable septum site-determining protein MinC.